Here is a 326-residue protein sequence, read N- to C-terminus: N-acetyl-gamma-glutamyl-phosphate reductase (326 aa).

The active site involves Cys-155.

Belongs to the NAGSA dehydrogenase family. Type 1 subfamily.

The protein resides in the cytoplasm. It carries out the reaction N-acetyl-L-glutamate 5-semialdehyde + phosphate + NADP(+) = N-acetyl-L-glutamyl 5-phosphate + NADPH + H(+). The protein operates within amino-acid biosynthesis; L-arginine biosynthesis; N(2)-acetyl-L-ornithine from L-glutamate: step 3/4. Catalyzes the NADPH-dependent reduction of N-acetyl-5-glutamyl phosphate to yield N-acetyl-L-glutamate 5-semialdehyde. The sequence is that of N-acetyl-gamma-glutamyl-phosphate reductase from Shewanella frigidimarina (strain NCIMB 400).